The primary structure comprises 366 residues: UDP-N-acetylglucosamine--N-acetylmuramyl-(pentapeptide) pyrophosphoryl-undecaprenol N-acetylglucosamine transferase (366 aa).

UDP-N-acetyl-alpha-D-glucosamine is bound by residues 14 to 16 (TGG), Asn-128, Arg-169, Ser-201, Ile-251, and Gln-296.

Belongs to the glycosyltransferase 28 family. MurG subfamily.

The protein localises to the cell inner membrane. It carries out the reaction di-trans,octa-cis-undecaprenyl diphospho-N-acetyl-alpha-D-muramoyl-L-alanyl-D-glutamyl-meso-2,6-diaminopimeloyl-D-alanyl-D-alanine + UDP-N-acetyl-alpha-D-glucosamine = di-trans,octa-cis-undecaprenyl diphospho-[N-acetyl-alpha-D-glucosaminyl-(1-&gt;4)]-N-acetyl-alpha-D-muramoyl-L-alanyl-D-glutamyl-meso-2,6-diaminopimeloyl-D-alanyl-D-alanine + UDP + H(+). It functions in the pathway cell wall biogenesis; peptidoglycan biosynthesis. Cell wall formation. Catalyzes the transfer of a GlcNAc subunit on undecaprenyl-pyrophosphoryl-MurNAc-pentapeptide (lipid intermediate I) to form undecaprenyl-pyrophosphoryl-MurNAc-(pentapeptide)GlcNAc (lipid intermediate II). This chain is UDP-N-acetylglucosamine--N-acetylmuramyl-(pentapeptide) pyrophosphoryl-undecaprenol N-acetylglucosamine transferase, found in Christiangramia forsetii (strain DSM 17595 / CGMCC 1.15422 / KT0803) (Gramella forsetii).